A 161-amino-acid chain; its full sequence is Cyclic pyranopterin monophosphate synthase (161 aa).

Substrate-binding positions include 78–80 and 116–117; these read MCH and ME. The active site involves Asp131.

This sequence belongs to the MoaC family. In terms of assembly, homohexamer; trimer of dimers.

The catalysed reaction is (8S)-3',8-cyclo-7,8-dihydroguanosine 5'-triphosphate = cyclic pyranopterin phosphate + diphosphate. Its pathway is cofactor biosynthesis; molybdopterin biosynthesis. Functionally, catalyzes the conversion of (8S)-3',8-cyclo-7,8-dihydroguanosine 5'-triphosphate to cyclic pyranopterin monophosphate (cPMP). This chain is Cyclic pyranopterin monophosphate synthase, found in Nitratidesulfovibrio vulgaris (strain ATCC 29579 / DSM 644 / CCUG 34227 / NCIMB 8303 / VKM B-1760 / Hildenborough) (Desulfovibrio vulgaris).